The following is a 55-amino-acid chain: uncharacterized protein (55 aa).

The chain crosses the membrane as a helical span at residues 24–46 (LFIIFFTYSYYYCGFLQSFNYII).

It localises to the membrane. This is an uncharacterized protein from Dictyostelium discoideum (Social amoeba).